Consider the following 307-residue polypeptide: Regulating synaptic membrane exocytosis protein 3 (307 aa).

Residues 86–120 form a disordered region; the sequence is STETGIAVEMRSRVTRQGSRESTDGSTNSNSSEGT. A compositionally biased stretch (polar residues) spans 109–119; it reads DGSTNSNSSEG. The C2 domain occupies 155 to 273; that stretch reads PMGDVHIAIM…DLSAVVTGWY (119 aa). Residues serine 294 and serine 297 each carry the phosphoserine modification.

Binds PPFIA3. Does not bind RAB3. As to expression, expressed exclusively in brain with significant levels in cortex, cerebellum and olfactory bulb. Detected at lower level in hippocampus.

It is found in the synapse. Its function is as follows. Regulates synaptic membrane exocytosis. In Rattus norvegicus (Rat), this protein is Regulating synaptic membrane exocytosis protein 3 (Rims3).